A 382-amino-acid polypeptide reads, in one-letter code: Pyrimidine monooxygenase RutA (382 aa).

FMN is bound by residues 68-69, Asn134, Glu143, 159-160, and Ser209; these read IK and RY.

It belongs to the NtaA/SnaA/DszA monooxygenase family. RutA subfamily.

The enzyme catalyses uracil + FMNH2 + NADH + O2 = (Z)-3-ureidoacrylate + FMN + NAD(+) + H2O + H(+). It carries out the reaction thymine + FMNH2 + NADH + O2 = (Z)-2-methylureidoacrylate + FMN + NAD(+) + H2O + H(+). Functionally, catalyzes the pyrimidine ring opening between N-3 and C-4 by an unusual flavin hydroperoxide-catalyzed mechanism, adding oxygen atoms in the process to yield ureidoacrylate peracid, that immediately reacts with FMN forming ureidoacrylate and FMN-N(5)-oxide. The FMN-N(5)-oxide reacts spontaneously with NADH to produce FMN. Requires the flavin reductase RutF to regenerate FMN in vivo. The protein is Pyrimidine monooxygenase RutA of Escherichia coli O150:H5 (strain SE15).